The following is a 248-amino-acid chain: 4-hydroxy-tetrahydrodipicolinate reductase (248 aa).

Residues 9–14 (GAQGRV), 77–79 (GTT), and 104–107 (APNF) contribute to the NAD(+) site. The active-site Proton donor/acceptor is histidine 134. Histidine 135 is a binding site for (S)-2,3,4,5-tetrahydrodipicolinate. Catalysis depends on lysine 138, which acts as the Proton donor. Residue 144 to 145 (GT) coordinates (S)-2,3,4,5-tetrahydrodipicolinate. The interval 157 to 176 (RREAGMPTQPDATEQSLDGA) is disordered.

It belongs to the DapB family.

Its subcellular location is the cytoplasm. It catalyses the reaction (S)-2,3,4,5-tetrahydrodipicolinate + NAD(+) + H2O = (2S,4S)-4-hydroxy-2,3,4,5-tetrahydrodipicolinate + NADH + H(+). It carries out the reaction (S)-2,3,4,5-tetrahydrodipicolinate + NADP(+) + H2O = (2S,4S)-4-hydroxy-2,3,4,5-tetrahydrodipicolinate + NADPH + H(+). Its pathway is amino-acid biosynthesis; L-lysine biosynthesis via DAP pathway; (S)-tetrahydrodipicolinate from L-aspartate: step 4/4. Catalyzes the conversion of 4-hydroxy-tetrahydrodipicolinate (HTPA) to tetrahydrodipicolinate. The protein is 4-hydroxy-tetrahydrodipicolinate reductase of Corynebacterium diphtheriae (strain ATCC 700971 / NCTC 13129 / Biotype gravis).